The sequence spans 308 residues: ATP synthase gamma chain (308 aa).

This sequence belongs to the ATPase gamma chain family. F-type ATPases have 2 components, CF(1) - the catalytic core - and CF(0) - the membrane proton channel. CF(1) has five subunits: alpha(3), beta(3), gamma(1), delta(1), epsilon(1). CF(0) has three main subunits: a, b and c.

Its subcellular location is the cell membrane. Its function is as follows. Produces ATP from ADP in the presence of a proton gradient across the membrane. The gamma chain is believed to be important in regulating ATPase activity and the flow of protons through the CF(0) complex. The chain is ATP synthase gamma chain from Mycobacteroides abscessus (strain ATCC 19977 / DSM 44196 / CCUG 20993 / CIP 104536 / JCM 13569 / NCTC 13031 / TMC 1543 / L948) (Mycobacterium abscessus).